The chain runs to 1059 residues: Zinc finger protein 865 (1059 aa).

Disordered regions lie at residues 1-24 (MEANPAGSGAGGGGSSGIGGEDGV), 58-142 (LPCA…DAAF), and 161-206 (NLKR…CDPT). Positions 8 to 21 (SGAGGGGSSGIGGE) are enriched in gly residues. Pro residues predominate over residues 61 to 78 (APGPPPQPPPQPPPPQYD). The segment covering 93 to 119 (SSSSSSSSSSSSSSSSSSSSSSSSSQA) has biased composition (low complexity). Composition is skewed to pro residues over residues 124–137 (PPLPPAFGAPPPPL) and 183–198 (APGPLPAPSQTPPGPP). C2H2-type zinc fingers lie at residues 224-246 (FPCGVCQKSFKQSSHLVQHMLVH) and 252-274 (YECGVCGRTYNHVSSLIRHRRCH). A disordered region spans residues 275 to 342 (KDVPPAAGGP…PAGVGVPPPA (68 aa)). The segment covering 281–296 (AGGPPQPGPHLPPLGL) has biased composition (pro residues). Composition is skewed to low complexity over residues 297–316 (PAPAASAATAAAPSTVSSGP) and 324–337 (APSADGSAAPAGVG). 4 C2H2-type zinc fingers span residues 350-372 (FACPLCWKVFKKPSHLHQHQIIH), 378-400 (FSCSVCSKSFNRRESLKRHVKTH), 407-429 (LPCGICGKAFRDASYLLKHQAAH), and 441-463 (YPCDLCGKSYSAPQSLLRHKAAH). The interval 461 to 503 (AAHAPPAAAAEAPKDGAASAPQPPPTFPPGPYLLPPDPPTTDS) is disordered. Positions 463–480 (HAPPAAAAEAPKDGAASA) are enriched in low complexity. Pro residues predominate over residues 481-499 (PQPPPTFPPGPYLLPPDPP). C2H2-type zinc fingers lie at residues 550-572 (FCCGICGRGFGRRETLKRHERIH), 578-600 (HQCPVCGKRFRESFHLSKHHVVH), 606-628 (YKCELCGKVFGYPQSLTRHRQVH), 669-691 (YACSDCGEHFPDLFHVMSHKEVH), and 697-719 (YGCDACGKTFGFIENLMWHKLVH). Residues 726-747 (LLPPAPGGLQPPDGSSGTDAAS) are disordered. 9 consecutive C2H2-type zinc fingers follow at residues 792–814 (FSCATCGQSFKHFLGLVTHKYVH), 820–842 (LGCGLCGQSFAGAYDLLLHRRSH), 848–870 (FRCPVCGKRFWEAALLMRHQRCH), 876–898 (YRCGVCGRGFLRSWYLRQHRVVH), 904–926 (FKCGVCAKRFAQSSSLAEHRRLH), 932–954 (QRCSACGKTFRYRSNLLEHQRLH), 960–982 (YRCEHCGKGFFYLSSVLRHQRAH), 989–1011 (LRCPACLKAFKDPGYFRKHLAAH), and 1017–1039 (FRCSSCGEGFANTYGLKKHRLAH). Lys802 participates in a covalent cross-link: Glycyl lysine isopeptide (Lys-Gly) (interchain with G-Cter in SUMO2). Lys1040 is covalently cross-linked (Glycyl lysine isopeptide (Lys-Gly) (interchain with G-Cter in SUMO2)).

Belongs to the krueppel C2H2-type zinc-finger protein family.

The protein resides in the nucleus. In terms of biological role, may be involved in transcriptional regulation. This Homo sapiens (Human) protein is Zinc finger protein 865 (ZNF865).